A 396-amino-acid chain; its full sequence is tRNA (guanine-N(7)-)-methyltransferase non-catalytic subunit wuho (396 aa).

4 WD repeats span residues 75 to 115 (KVEV…AQLL), 162 to 201 (GHLS…DIHS), 205 to 243 (GHKE…ELLL), and 302 to 342 (AGTW…RASG).

The protein belongs to the WD repeat TRM82 family. Forms a heterodimer with the catalytic subunit Mettl1. Interacts with mei-P26 and weakly interacts with bgcn; required for the function or formation of the mei-P26-bgcn-bam-sxl complex. Interacts with nanos; may be involved in mei-P26-dependent derepression of the BMP signaling pathway. Interacts with Myc; the interaction may be mediated by mei-P26 and may be involved in the regulation of ribosome biogenesis. In testis, it is present at high level in hub cells, a niche for germline stem cells of testis. Ubiquitously expressed in all testicular cells throughout spermatogenesis. Ubiquitously expressed in all germline and somatic cells of the ovary.

It localises to the nucleus. It is found in the cytoplasm. Its pathway is tRNA modification; N(7)-methylguanine-tRNA biosynthesis. Functionally, required for the Mettl1-dependent formation of N(7)-methylguanine at position 46 (m7G46) in tRNA. In the Mettl1-wuho methyltransferase complex, it is required to stabilize and induce conformational changes of the catalytic subunit. Required for binding of nanos mRNA and repression of translation by the mei-P26-bgcn-bam-sxl complex. May cooperate with mei-P26 and nanos to derepress the BMP signaling pathway. May cooperate with mei-P26 to suppress expression of a subset of microRNAs. May cooperate with mei-P26 to regulate bam expression levels in germline cells during gametogenesis. Required to promote mitosis to meiosis transition during gametogenesis. May regulate germline cell division in part by regulating ribosome biogenesis. The polypeptide is tRNA (guanine-N(7)-)-methyltransferase non-catalytic subunit wuho (Drosophila pseudoobscura pseudoobscura (Fruit fly)).